Here is a 428-residue protein sequence, read N- to C-terminus: D-amino acid dehydrogenase (428 aa).

Position 3 to 17 (3 to 17 (VVILGSGVVGVASAY)) interacts with FAD.

It belongs to the DadA oxidoreductase family. FAD serves as cofactor.

The enzyme catalyses a D-alpha-amino acid + A + H2O = a 2-oxocarboxylate + AH2 + NH4(+). The protein operates within amino-acid degradation; D-alanine degradation; NH(3) and pyruvate from D-alanine: step 1/1. Functionally, oxidative deamination of D-amino acids. This Burkholderia cenocepacia (strain HI2424) protein is D-amino acid dehydrogenase.